The following is a 113-amino-acid chain: UPF0482 protein KPK_2871 (113 aa).

The first 28 residues, 1–28 (MNMTLNKRWCLTAILALSAVVYTSSSFA), serve as a signal peptide directing secretion. A disordered region spans residues 38 to 61 (GDSAQSRQQASMEKEQWNDTRSLR). The span at 39-48 (DSAQSRQQAS) shows a compositional bias: polar residues. The segment covering 49–59 (MEKEQWNDTRS) has biased composition (basic and acidic residues).

This sequence belongs to the UPF0482 family.

In Klebsiella pneumoniae (strain 342), this protein is UPF0482 protein KPK_2871.